We begin with the raw amino-acid sequence, 164 residues long: MGFLEINWTSAAMLMLFVLMVYFLNKFLYTPFIEMAEKRRKKVEEDLKSAEQLKEEAEKMRSEAERFLSEARQRADEIVESARKEAEAIVEEAREKAKKEAQNIVESAKTQIEVEYKKALEQVQERAAELSVILATKLLQKVFQDERARREYLVKILKEEIEKS.

Residues 10–32 (SAAMLMLFVLMVYFLNKFLYTPF) traverse the membrane as a helical segment.

It belongs to the ATPase B chain family. F-type ATPases have 2 components, F(1) - the catalytic core - and F(0) - the membrane proton channel. F(1) has five subunits: alpha(3), beta(3), gamma(1), delta(1), epsilon(1). F(0) has three main subunits: a(1), b(2) and c(10-14). The alpha and beta chains form an alternating ring which encloses part of the gamma chain. F(1) is attached to F(0) by a central stalk formed by the gamma and epsilon chains, while a peripheral stalk is formed by the delta and b chains.

The protein resides in the cell inner membrane. F(1)F(0) ATP synthase produces ATP from ADP in the presence of a proton or sodium gradient. F-type ATPases consist of two structural domains, F(1) containing the extramembraneous catalytic core and F(0) containing the membrane proton channel, linked together by a central stalk and a peripheral stalk. During catalysis, ATP synthesis in the catalytic domain of F(1) is coupled via a rotary mechanism of the central stalk subunits to proton translocation. In terms of biological role, component of the F(0) channel, it forms part of the peripheral stalk, linking F(1) to F(0). This chain is ATP synthase subunit b, found in Thermotoga maritima (strain ATCC 43589 / DSM 3109 / JCM 10099 / NBRC 100826 / MSB8).